The chain runs to 730 residues: Catalase-peroxidase (730 aa).

Basic and acidic residues predominate over residues 1-11 (MDAKTDDKDAG). The first 21 residues, 1 to 21 (MDAKTDDKDAGKCPFSSGSHA), serve as a signal peptide directing secretion. Positions 1-24 (MDAKTDDKDAGKCPFSSGSHAHRN) are disordered. Positions 96 to 218 (WHSAGTYRIS…LGAVQMGLIY (123 aa)) form a cross-link, tryptophyl-tyrosyl-methioninium (Trp-Tyr) (with M-244). H97 (proton acceptor) is an active-site residue. The segment at residues 218-244 (YVNPEGPNGNPDPVGSAKDIRETFYRM) is a cross-link (tryptophyl-tyrosyl-methioninium (Tyr-Met) (with W-96)). Heme b is bound at residue H259.

The protein belongs to the peroxidase family. Peroxidase/catalase subfamily. In terms of assembly, homodimer or homotetramer. Heme b is required as a cofactor. In terms of processing, formation of the three residue Trp-Tyr-Met cross-link is important for the catalase, but not the peroxidase activity of the enzyme.

It carries out the reaction H2O2 + AH2 = A + 2 H2O. The catalysed reaction is 2 H2O2 = O2 + 2 H2O. Bifunctional enzyme with both catalase and broad-spectrum peroxidase activity. The protein is Catalase-peroxidase of Rhodopseudomonas palustris (strain BisA53).